The following is a 518-amino-acid chain: RNA-binding protein FUS (518 aa).

Over residues 1–14 (MASNDYTQQATQSY) the composition is skewed to polar residues. The disordered stretch occupies residues 1–279 (MASNDYTQQA…SEQDNSDNNT (279 aa)). 3 stretches are compositionally biased toward low complexity: residues 20-63 (QPGQ…GQTQ), 84-105 (SSQS…GQQP), and 116-126 (GSSQSSSYGQP). Over residues 127 to 139 (QSGGYGQQSGYGG) the composition is skewed to gly residues. Positions 140 to 166 (QQQSYGQQQSSYNPPQGYGQQNQYNSS) are enriched in low complexity. Composition is skewed to gly residues over residues 167–178 (SGGGGGGGGGNY) and 186–225 (SGGG…GGGY). An asymmetric dimethylarginine; alternate mark is found at arginine 217 and arginine 219. 2 positions are modified to omega-N-methylarginine; alternate: arginine 217 and arginine 219. Arginine 235, arginine 237, arginine 241, arginine 244, and arginine 252 each carry asymmetric dimethylarginine. The segment covering 237 to 252 (RGGGRGGRGGMGGSDR) has biased composition (gly residues). Serine 270 bears the Phosphoserine mark. The region spanning 278-364 (NTIFVQGLGE…NPIKVSFATR (87 aa)) is the RRM domain. Threonine 279 carries the phosphothreonine modification. Lysine 327 participates in a covalent cross-link: Glycyl lysine isopeptide (Lys-Gly) (interchain with G-Cter in SUMO2). A Phosphoserine modification is found at serine 333. Disordered regions lie at residues 368–417 (FNRG…QRAG) and 437–518 (CNQC…ERPY). Residues arginine 370, arginine 376, arginine 379, arginine 381, and arginine 387 each carry the asymmetric dimethylarginine modification. Gly residues predominate over residues 370–414 (RGGGNGRGGRGRGGPMGRGGYGGGGSGGGGRGGFPSGGGGGGGQQ). Residue arginine 400 is modified to Asymmetric dimethylarginine; alternate. Position 400 is an omega-N-methylarginine; alternate (arginine 400). The RanBP2-type zinc finger occupies 415–446 (RAGDWKCPNPTCENMNFSWRNECNQCKAPKPD). The segment covering 447-461 (GPGGGPGGSHMGGNY) has biased composition (gly residues). Residues 462–485 (GDDRRGRGGYDRGGYRGRGGDRGG) are compositionally biased toward basic and acidic residues. Residues arginine 466, arginine 468, arginine 473, arginine 477, arginine 479, arginine 483, arginine 487, and arginine 490 each carry the asymmetric dimethylarginine modification. Residues 486 to 500 (FRGGRGGGDRGGFGP) are compositionally biased toward gly residues. Arginine 495 carries the post-translational modification Asymmetric dimethylarginine; alternate. At arginine 495 the chain carries Omega-N-methylarginine; alternate. Residues 503–518 (MDSRGEHRQDRRERPY) are compositionally biased toward basic and acidic residues.

This sequence belongs to the RRM TET family. Self-oligomerizes (via N-terminal region). Oligomerization is essential for chromatin binding. Component of nuclear riboprotein complexes. Interacts with ILF3, TDRD3 and SF1. Interacts through its C-terminus with SFRS13A. Interacts with OTUB1 and SARNP. Interacts with LRSAM1. Interacts with SAFB1 in a DNA-dependent manner; this interaction tethers FUS to chromatin. Interacts with MATR3. Interacts with SNRNP70 and POLR2A; these interactions couple RNA transcription and splicing. Interacts (through its RNA-binding domain) with RALY (through its RNA-binding domain); both are components of the same RNPs. In terms of processing, phosphorylated in its N-terminal serine residues upon induced DNA damage. ATM and DNA-PK are able to phosphorylate FUS N-terminal region.

The protein resides in the nucleus. DNA/RNA-binding protein that plays a role in various cellular processes such as transcription regulation, RNA splicing, RNA transport, DNA repair and damage response. Binds to ssRNA containing the consensus sequence 5'-AGGUAA-3'. Binds to nascent pre-mRNAs and acts as a molecular mediator between RNA polymerase II and U1 small nuclear ribonucleoprotein thereby coupling transcription and splicing. Also binds its own pre-mRNA and autoregulates its expression; this autoregulation mechanism is mediated by non-sense-mediated decay. Plays a role in DNA repair mechanisms by promoting D-loop formation and homologous recombination during DNA double-strand break repair. In neuronal cells, plays crucial roles in dendritic spine formation and stability, RNA transport, mRNA stability and synaptic homeostasis. This chain is RNA-binding protein FUS (Fus), found in Mus musculus (Mouse).